The chain runs to 307 residues: tRNA-cytidine(32) 2-sulfurtransferase (307 aa).

The PP-loop motif motif lies at 44–49 (SGGKDS). [4Fe-4S] cluster-binding residues include Cys-119, Cys-122, and Cys-210.

It belongs to the TtcA family. Homodimer. Requires Mg(2+) as cofactor. The cofactor is [4Fe-4S] cluster.

The protein localises to the cytoplasm. The enzyme catalyses cytidine(32) in tRNA + S-sulfanyl-L-cysteinyl-[cysteine desulfurase] + AH2 + ATP = 2-thiocytidine(32) in tRNA + L-cysteinyl-[cysteine desulfurase] + A + AMP + diphosphate + H(+). Its pathway is tRNA modification. Catalyzes the ATP-dependent 2-thiolation of cytidine in position 32 of tRNA, to form 2-thiocytidine (s(2)C32). The sulfur atoms are provided by the cysteine/cysteine desulfurase (IscS) system. The chain is tRNA-cytidine(32) 2-sulfurtransferase from Aliivibrio salmonicida (strain LFI1238) (Vibrio salmonicida (strain LFI1238)).